Consider the following 166-residue polypeptide: Large ribosomal subunit protein uL10 (166 aa).

It belongs to the universal ribosomal protein uL10 family. As to quaternary structure, part of the ribosomal stalk of the 50S ribosomal subunit. The N-terminus interacts with L11 and the large rRNA to form the base of the stalk. The C-terminus forms an elongated spine to which L12 dimers bind in a sequential fashion forming a multimeric L10(L12)X complex.

In terms of biological role, forms part of the ribosomal stalk, playing a central role in the interaction of the ribosome with GTP-bound translation factors. This Streptococcus agalactiae serotype V (strain ATCC BAA-611 / 2603 V/R) protein is Large ribosomal subunit protein uL10.